A 364-amino-acid chain; its full sequence is Doublecortin domain-containing protein 2C (364 aa).

Doublecortin domains are found at residues 16 to 98 (KTIV…LDYI) and 136 to 217 (RHIN…FPYW). A disordered region spans residues 233–255 (VEKNSQRKKKVDSKGKEPCKYDG).

In terms of tissue distribution, expressed in testis and spermatozoa (at protein level).

It localises to the cell projection. The protein localises to the cilium. The protein resides in the flagellum. It is found in the cytoplasm. The sequence is that of Doublecortin domain-containing protein 2C from Homo sapiens (Human).